Consider the following 149-residue polypeptide: Transcriptional repressor NrdR (149 aa).

A zinc finger lies at 3–34; that stretch reads CPFCDTEETKVIDSRLVSDGYQVRRRRECGHC. Residues 49–139 enclose the ATP-cone domain; it reads PKIIKTDGTR…VYLSFDDIDQ (91 aa).

The protein belongs to the NrdR family. Zn(2+) serves as cofactor.

Functionally, negatively regulates transcription of bacterial ribonucleotide reductase nrd genes and operons by binding to NrdR-boxes. This Haemophilus influenzae (strain PittEE) protein is Transcriptional repressor NrdR.